A 328-amino-acid chain; its full sequence is Alanine racemase (328 aa).

Lys33 (proton acceptor; specific for D-alanine) is an active-site residue. The residue at position 33 (Lys33) is an N6-(pyridoxal phosphate)lysine. Arg118 provides a ligand contact to substrate. The Proton acceptor; specific for L-alanine role is filled by Tyr237. Met283 contributes to the substrate binding site.

This sequence belongs to the alanine racemase family. Pyridoxal 5'-phosphate serves as cofactor.

The enzyme catalyses L-alanine = D-alanine. Its pathway is amino-acid biosynthesis; D-alanine biosynthesis; D-alanine from L-alanine: step 1/1. Functionally, catalyzes the interconversion of L-alanine and D-alanine. May also act on other amino acids. In Campylobacter jejuni subsp. doylei (strain ATCC BAA-1458 / RM4099 / 269.97), this protein is Alanine racemase (alr).